The sequence spans 651 residues: Receptor-like serine/threonine-protein kinase At4g25390 (651 aa).

The N-terminal stretch at 1-25 (MPSRSISAPVPVLAPAPIVSSLVPA) is a signal peptide. Topologically, residues 26–40 (APSGHQNKTTRIFPP) are extracellular. Asn-32 carries an N-linked (GlcNAc...) asparagine glycan. Residues 41 to 61 (FVVAGAGAGFSLFITLSVCFC) traverse the membrane as a helical segment. At 62-651 (KFSRKRSSPP…PLKTTRKQRR (590 aa)) the chain is on the cytoplasmic side. The tract at residues 66-87 (KRSSPPAENASSSPRRPSPREF) is disordered. Residues 69 to 87 (SPPAENASSSPRRPSPREF) are compositionally biased toward low complexity. In terms of domain architecture, Protein kinase spans 99–633 (FSQANRLGQG…LKGEVNLPEL (535 aa)). ATP is bound by residues 105–113 (LGQGGFGVV) and Lys-127. Asp-225 serves as the catalytic Proton acceptor.

Belongs to the protein kinase superfamily. Ser/Thr protein kinase family.

The protein resides in the cell membrane. It carries out the reaction L-seryl-[protein] + ATP = O-phospho-L-seryl-[protein] + ADP + H(+). The catalysed reaction is L-threonyl-[protein] + ATP = O-phospho-L-threonyl-[protein] + ADP + H(+). This Arabidopsis thaliana (Mouse-ear cress) protein is Receptor-like serine/threonine-protein kinase At4g25390.